The sequence spans 305 residues: Aurasperone B biosynthesis cluster protein A (305 aa).

The signal sequence occupies residues 1–26; it reads MSIFFSIRFWPAAISAAILWLPQVLG. Asparagine 29, asparagine 34, asparagine 64, asparagine 83, asparagine 132, asparagine 183, asparagine 218, and asparagine 288 each carry an N-linked (GlcNAc...) asparagine glycan.

The protein belongs to the bfoA family.

Functionally, part of the gene cluster that mediates the biosynthesis of aurasperone B, a dimeric gamma-naphthopyrone. The first step in the biosynthesis of aurasperone B is the production of gamma-naphthopyrone precursor YWA1 by the non-reducing polyketide synthase albA, via condensation of one acetyl-CoA starter unit with 6 malonyl-CoA units. YWA1 is then methylated by aunE at position C-6 to yield foncesin which is further methylated at position C-8 by aunD to produce fonsecin B. A key enzyme in the biosynthetic pathway is the cytochrome P450 monooxygenase aunB which catalyzes the oxidative dimerization of fonsecin B to aurasperone B. AunB also catalyzes the oxidative dimerization of rubrofusarin B into aurasperone A. The protein is Aurasperone B biosynthesis cluster protein A of Aspergillus niger (strain ATCC 1015 / CBS 113.46 / FGSC A1144 / LSHB Ac4 / NCTC 3858a / NRRL 328 / USDA 3528.7).